Reading from the N-terminus, the 227-residue chain is Paired immunoglobulin-like type 2 receptor beta (227 aa).

An N-terminal signal peptide occupies residues 1 to 19 (MGRPLLLPLLLLLQPPAFL). Residues 20–191 (QPGGSTGSGP…WHLSLDTAIR (172 aa)) are Extracellular-facing. The 123-residue stretch at 21 to 143 (PGGSTGSGPS…SGRQQLQSIK (123 aa)) folds into the Ig-like V-type domain. The N-linked (GlcNAc...) asparagine glycan is linked to asparagine 100. Residues 192–212 (VALAVAVLKTVILGLLCLLLL) traverse the membrane as a helical segment. Over 213-227 (WWRRRKGSRAPSSDF) the chain is Cytoplasmic.

The protein localises to the membrane. Functionally, paired receptors consist of highly related activating and inhibitory receptors and are widely involved in the regulation of the immune system. PILRB is thought to act as a cellular signaling activating receptor that associates with ITAM-bearing adapter molecules on the cell surface. In Homo sapiens (Human), this protein is Paired immunoglobulin-like type 2 receptor beta (PILRB).